The following is a 151-amino-acid chain: MPRGSRSRTSRMAPPASRAPQMRAAPRPAPVAQPPAAAPPSAVGSSAAAPRQPGLMAQMATTAAGVAVGSAVGHTQGHAVTGGFSGGSNAEPARPDIAYQEPQGTQPAQQQQPCFYGIKQFLECAQNQGDIKLCEDFSKVLKQCRLAKGLA.

The N-terminal 9 residues, 1–9 (MPRGSRSRT), are a transit peptide targeting the mitochondrion. Disordered stretches follow at residues 1–50 (MPRG…AAAP) and 75–110 (TQGHAVTGGFSGGSNAEPARPDIAYQEPQGTQPAQQ). Positions 10–26 (SRMAPPASRAPQMRAAP) are enriched in low complexity. Pro residues predominate over residues 27-38 (RPAPVAQPPAAA). 2 stretches are compositionally biased toward low complexity: residues 39–50 (PPSAVGSSAAAP) and 100–110 (QEPQGTQPAQQ). Positions 111 to 151 (QQPCFYGIKQFLECAQNQGDIKLCEDFSKVLKQCRLAKGLA) constitute a CHCH domain. 2 short sequence motifs (cx9C motif) span residues 114-124 (CFYGIKQFLEC) and 134-144 (CEDFSKVLKQC). 2 disulfide bridges follow: Cys114–Cys144 and Cys124–Cys134.

It is found in the mitochondrion. This Homo sapiens (Human) protein is Putative coiled-coil-helix-coiled-coil-helix domain-containing protein CHCHD2P9, mitochondrial (CHCHD2P9).